A 676-amino-acid chain; its full sequence is Exostosin-like 1 (676 aa).

The Cytoplasmic portion of the chain corresponds to M1 to S9. A helical; Signal-anchor for type II membrane protein membrane pass occupies residues L10–L30. Residues R31 to P676 lie on the Lumenal side of the membrane. The interval T238–Q264 is disordered. The N-linked (GlcNAc...) asparagine glycan is linked to N269. C584 and C634 are oxidised to a cystine. Residues R610–A631 form a disordered region. The segment covering P618–A631 has biased composition (pro residues).

It belongs to the glycosyltransferase 47 family.

Its subcellular location is the endoplasmic reticulum membrane. It catalyses the reaction 3-O-{[(1-&gt;4)-beta-D-GlcA-(1-&gt;4)-alpha-D-GlcNAc](n)-(1-&gt;4)-beta-D-GlcA-(1-&gt;3)-beta-D-Gal-(1-&gt;3)-beta-D-Gal-(1-&gt;4)-beta-D-Xyl}-L-seryl-[protein] + UDP-N-acetyl-alpha-D-glucosamine = 3-O-{alpha-D-GlcNAc-[(1-&gt;4)-beta-D-GlcA-(1-&gt;4)-alpha-D-GlcNAc](n)-(1-&gt;4)-beta-D-GlcA-(1-&gt;3)-beta-D-Gal-(1-&gt;3)-beta-D-Gal-(1-&gt;4)-beta-D-Xyl}-L-seryl-[protein] + UDP + H(+). The protein operates within protein modification; protein glycosylation. Glycosyltransferase required for the biosynthesis of heparan-sulfate (HS). Transfers N-acetyl-alpha-D-glucosamine to the nascent HS chain (GlcNAcT-II activity). Appears to lack GlcNAcT I and GlcAT-II activities. This Homo sapiens (Human) protein is Exostosin-like 1 (EXTL1).